The chain runs to 256 residues: Omega-amidase YafV (256 aa).

Positions Leu4 to Met234 constitute a CN hydrolase domain. The active-site Proton acceptor is the Glu42. Lys107 (proton donor) is an active-site residue. The active-site Nucleophile is Cys141.

The protein belongs to the carbon-nitrogen hydrolase superfamily. NIT1/NIT2 family.

The enzyme catalyses a monoamide of a dicarboxylate + H2O = a dicarboxylate + NH4(+). Hydrolyzes alpha-ketoglutaramate (a-KGM) to alpha-ketoglutarate (alpha-KG) and ammonia, has weak activity on L-glutamine, almost no activity on deaminated glutathione (dGSH) and none on glutathione. May function as a metabolite repair enzyme. This Escherichia coli (strain K12) protein is Omega-amidase YafV (yafV).